We begin with the raw amino-acid sequence, 281 residues long: Bis(5'-nucleosyl)-tetraphosphatase, symmetrical (281 aa).

Belongs to the Ap4A hydrolase family.

It carries out the reaction P(1),P(4)-bis(5'-adenosyl) tetraphosphate + H2O = 2 ADP + 2 H(+). Functionally, hydrolyzes diadenosine 5',5'''-P1,P4-tetraphosphate to yield ADP. This chain is Bis(5'-nucleosyl)-tetraphosphatase, symmetrical, found in Pectobacterium atrosepticum (strain SCRI 1043 / ATCC BAA-672) (Erwinia carotovora subsp. atroseptica).